The following is a 283-amino-acid chain: ATP phosphoribosyltransferase (283 aa).

Belongs to the ATP phosphoribosyltransferase family. Long subfamily. Mg(2+) serves as cofactor.

It localises to the cytoplasm. It carries out the reaction 1-(5-phospho-beta-D-ribosyl)-ATP + diphosphate = 5-phospho-alpha-D-ribose 1-diphosphate + ATP. Its pathway is amino-acid biosynthesis; L-histidine biosynthesis; L-histidine from 5-phospho-alpha-D-ribose 1-diphosphate: step 1/9. Its activity is regulated as follows. Feedback inhibited by histidine. In terms of biological role, catalyzes the condensation of ATP and 5-phosphoribose 1-diphosphate to form N'-(5'-phosphoribosyl)-ATP (PR-ATP). Has a crucial role in the pathway because the rate of histidine biosynthesis seems to be controlled primarily by regulation of HisG enzymatic activity. In Salinibacter ruber (strain DSM 13855 / M31), this protein is ATP phosphoribosyltransferase.